The chain runs to 88 residues: Class I hydrophobin F (88 aa).

Residues methionine 1 to threonine 21 form the signal peptide. 4 disulfide bridges follow: cysteine 30-cysteine 67, cysteine 34-cysteine 58, cysteine 35-cysteine 51, and cysteine 68-cysteine 84.

It belongs to the fungal hydrophobin family.

Its subcellular location is the secreted. The protein resides in the cell wall. It localises to the vacuole. It is found in the cytoplasmic vesicle. In terms of biological role, aerial growth, conidiation, and dispersal of filamentous fungi in the environment rely upon a capability of their secreting small amphipathic proteins called hydrophobins (HPBs) with low sequence identity. Class I can self-assemble into an outermost layer of rodlet bundles on aerial cell surfaces, conferring cellular hydrophobicity that supports fungal growth, development and dispersal; whereas Class II form highly ordered films at water-air interfaces through intermolecular interactions but contribute nothing to the rodlet structure. Hyd1F contributes to certain cell wall-related features, such as hydrophobicity but is not involved in cell wall-related events during fungal proliferation in host hemocoel. Does not contribute to conidial hydrophobicity. The protein is Class I hydrophobin F of Beauveria bassiana (strain ARSEF 2860) (White muscardine disease fungus).